We begin with the raw amino-acid sequence, 64 residues long: Alpha-like toxin Lqh6 (64 aa).

The LCN-type CS-alpha/beta domain occupies 2-63; the sequence is RDGYIAQPEN…GIIVDGVKCH (62 aa). 4 cysteine pairs are disulfide-bonded: Cys12/Cys62, Cys16/Cys34, Cys20/Cys44, and Cys24/Cys46. At Lys64 the chain carries Lysine amide.

The protein belongs to the long (4 C-C) scorpion toxin superfamily. Sodium channel inhibitor family. Alpha subfamily. In terms of tissue distribution, expressed by the venom gland.

The protein resides in the secreted. In terms of biological role, alpha toxins bind voltage-independently at site-3 of sodium channels (Nav) and inhibit the inactivation of the activated channels, thereby blocking neuronal transmission. This toxin is highly toxic to insects and mice, and inhibits the binding of alpha-toxin to cockroach neuronal membranes. This chain is Alpha-like toxin Lqh6, found in Leiurus hebraeus (Hebrew deathstalker scorpion).